Reading from the N-terminus, the 690-residue chain is Elongation factor G (690 aa).

Positions 8-283 (SKCRNIGIMA…AVVDFLPAPN (276 aa)) constitute a tr-type G domain. Residues 17–24 (AHIDAGKT), 81–85 (DTPGH), and 135–138 (NKMD) each bind GTP.

It belongs to the TRAFAC class translation factor GTPase superfamily. Classic translation factor GTPase family. EF-G/EF-2 subfamily.

Its subcellular location is the cytoplasm. In terms of biological role, catalyzes the GTP-dependent ribosomal translocation step during translation elongation. During this step, the ribosome changes from the pre-translocational (PRE) to the post-translocational (POST) state as the newly formed A-site-bound peptidyl-tRNA and P-site-bound deacylated tRNA move to the P and E sites, respectively. Catalyzes the coordinated movement of the two tRNA molecules, the mRNA and conformational changes in the ribosome. This chain is Elongation factor G, found in Ehrlichia canis (strain Jake).